The following is a 373-amino-acid chain: Putative glutamate--cysteine ligase 2-2 (373 aa).

This sequence belongs to the glutamate--cysteine ligase type 2 family. YbdK subfamily.

The catalysed reaction is L-cysteine + L-glutamate + ATP = gamma-L-glutamyl-L-cysteine + ADP + phosphate + H(+). ATP-dependent carboxylate-amine ligase which exhibits weak glutamate--cysteine ligase activity. The sequence is that of Putative glutamate--cysteine ligase 2-2 from Legionella pneumophila (strain Corby).